Consider the following 385-residue polypeptide: uncharacterized protein (385 aa).

Belongs to the mycobacterial PPE family.

This is an uncharacterized protein from Mycobacterium tuberculosis (strain CDC 1551 / Oshkosh).